The sequence spans 423 residues: UPF0229 protein Pput_0430 (423 aa).

The disordered stretch occupies residues 81-108; it reads EFTAGEHIPRPQGGGGGGGRGKAGNSGE. Residues 92–107 are compositionally biased toward gly residues; that stretch reads QGGGGGGGRGKAGNSG.

It belongs to the UPF0229 family.

This chain is UPF0229 protein Pput_0430, found in Pseudomonas putida (strain ATCC 700007 / DSM 6899 / JCM 31910 / BCRC 17059 / LMG 24140 / F1).